Consider the following 164-residue polypeptide: Lipoprotein signal peptidase (164 aa).

A run of 4 helical transmembrane segments spans residues 2 to 22 (MSLL…AIVL), 40 to 60 (VVIT…AFSF), 70 to 90 (WLFS…MAKA), and 99 to 119 (LAYS…VVYG). Catalysis depends on residues Asp123 and Asp142. A helical membrane pass occupies residues 138–158 (FNVADMAISCGAVFIILDGFI).

This sequence belongs to the peptidase A8 family.

It is found in the cell inner membrane. The enzyme catalyses Release of signal peptides from bacterial membrane prolipoproteins. Hydrolyzes -Xaa-Yaa-Zaa-|-(S,diacylglyceryl)Cys-, in which Xaa is hydrophobic (preferably Leu), and Yaa (Ala or Ser) and Zaa (Gly or Ala) have small, neutral side chains.. It functions in the pathway protein modification; lipoprotein biosynthesis (signal peptide cleavage). Its function is as follows. This protein specifically catalyzes the removal of signal peptides from prolipoproteins. This Tolumonas auensis (strain DSM 9187 / NBRC 110442 / TA 4) protein is Lipoprotein signal peptidase.